Consider the following 237-residue polypeptide: uncharacterized protein (237 aa).

The interval 213-237 (GQGKYLKLDSNTTENKTTKQNETGG) is disordered. Low complexity predominate over residues 223-237 (NTTENKTTKQNETGG).

This is an uncharacterized protein from Methanothermobacter thermautotrophicus (Methanobacterium thermoformicicum).